A 1106-amino-acid chain; its full sequence is Exportin-T (1106 aa).

The segment at 336 to 357 (TPLESRTRTGPSAQNGQSDTSD) is disordered. Over residues 343–357 (RTGPSAQNGQSDTSD) the composition is skewed to polar residues.

This sequence belongs to the exportin family.

The protein localises to the nucleus. The protein resides in the cytoplasm. Its function is as follows. tRNA nucleus export receptor which facilitates tRNA translocation across the nuclear pore complex. Involved in pre-tRNA splicing, probably by affecting the interaction of pre-tRNA with splicing endonuclease. This Mycosarcoma maydis (Corn smut fungus) protein is Exportin-T (LOS1).